We begin with the raw amino-acid sequence, 193 residues long: Segregation and condensation protein B (193 aa).

Belongs to the ScpB family. In terms of assembly, homodimer. Homodimerization may be required to stabilize the binding of ScpA to the Smc head domains. Component of a cohesin-like complex composed of ScpA, ScpB and the Smc homodimer, in which ScpA and ScpB bind to the head domain of Smc. The presence of the three proteins is required for the association of the complex with DNA.

Its subcellular location is the cytoplasm. Participates in chromosomal partition during cell division. May act via the formation of a condensin-like complex containing Smc and ScpA that pull DNA away from mid-cell into both cell halves. In Streptococcus thermophilus (strain ATCC BAA-250 / LMG 18311), this protein is Segregation and condensation protein B.